The primary structure comprises 216 residues: ATP-dependent Clp protease proteolytic subunit 3 (216 aa).

Serine 120 (nucleophile) is an active-site residue. The active site involves histidine 145.

The protein belongs to the peptidase S14 family. Fourteen ClpP subunits assemble into 2 heptameric rings which stack back to back to give a disk-like structure with a central cavity, resembling the structure of eukaryotic proteasomes.

The protein resides in the cytoplasm. The catalysed reaction is Hydrolysis of proteins to small peptides in the presence of ATP and magnesium. alpha-casein is the usual test substrate. In the absence of ATP, only oligopeptides shorter than five residues are hydrolyzed (such as succinyl-Leu-Tyr-|-NHMec, and Leu-Tyr-Leu-|-Tyr-Trp, in which cleavage of the -Tyr-|-Leu- and -Tyr-|-Trp bonds also occurs).. Functionally, cleaves peptides in various proteins in a process that requires ATP hydrolysis. Has a chymotrypsin-like activity. Plays a major role in the degradation of misfolded proteins. This chain is ATP-dependent Clp protease proteolytic subunit 3, found in Prochlorococcus marinus (strain SARG / CCMP1375 / SS120).